A 132-amino-acid polypeptide reads, in one-letter code: UPF0251 protein PTH_0588 (132 aa).

The protein belongs to the UPF0251 family.

The chain is UPF0251 protein PTH_0588 from Pelotomaculum thermopropionicum (strain DSM 13744 / JCM 10971 / SI).